Here is a 376-residue protein sequence, read N- to C-terminus: Glutamate 5-kinase (376 aa).

Lysine 15 is an ATP binding site. Residues serine 56, aspartate 143, and asparagine 155 each contribute to the substrate site. Serine 175–aspartate 176 serves as a coordination point for ATP. A PUA domain is found at lysine 281–threonine 358.

The protein belongs to the glutamate 5-kinase family.

The protein resides in the cytoplasm. The catalysed reaction is L-glutamate + ATP = L-glutamyl 5-phosphate + ADP. The protein operates within amino-acid biosynthesis; L-proline biosynthesis; L-glutamate 5-semialdehyde from L-glutamate: step 1/2. Catalyzes the transfer of a phosphate group to glutamate to form L-glutamate 5-phosphate. The protein is Glutamate 5-kinase of Rhodopseudomonas palustris (strain BisB18).